The chain runs to 192 residues: Transcription termination/antitermination protein NusG (192 aa).

The 29-residue stretch at 140–168 (VGEIVTVTDGPFETFMGTVEEIDQEKNRL) folds into the KOW domain.

The protein belongs to the NusG family.

Participates in transcription elongation, termination and antitermination. This Rickettsia conorii (strain ATCC VR-613 / Malish 7) protein is Transcription termination/antitermination protein NusG.